Consider the following 402-residue polypeptide: NADH-quinone oxidoreductase subunit D (402 aa).

Belongs to the complex I 49 kDa subunit family. In terms of assembly, NDH-1 is composed of 14 different subunits. Subunits NuoB, C, D, E, F, and G constitute the peripheral sector of the complex.

The protein localises to the cell inner membrane. It catalyses the reaction a quinone + NADH + 5 H(+)(in) = a quinol + NAD(+) + 4 H(+)(out). Its function is as follows. NDH-1 shuttles electrons from NADH, via FMN and iron-sulfur (Fe-S) centers, to quinones in the respiratory chain. The immediate electron acceptor for the enzyme in this species is believed to be ubiquinone. Couples the redox reaction to proton translocation (for every two electrons transferred, four hydrogen ions are translocated across the cytoplasmic membrane), and thus conserves the redox energy in a proton gradient. The protein is NADH-quinone oxidoreductase subunit D of Maricaulis maris (strain MCS10) (Caulobacter maris).